A 396-amino-acid chain; its full sequence is Phosphopentomutase (396 aa).

Mn(2+) contacts are provided by D13, D288, H293, D329, H330, and H341.

This sequence belongs to the phosphopentomutase family. Mn(2+) is required as a cofactor.

It is found in the cytoplasm. It carries out the reaction 2-deoxy-alpha-D-ribose 1-phosphate = 2-deoxy-D-ribose 5-phosphate. The catalysed reaction is alpha-D-ribose 1-phosphate = D-ribose 5-phosphate. Its pathway is carbohydrate degradation; 2-deoxy-D-ribose 1-phosphate degradation; D-glyceraldehyde 3-phosphate and acetaldehyde from 2-deoxy-alpha-D-ribose 1-phosphate: step 1/2. In terms of biological role, isomerase that catalyzes the conversion of deoxy-ribose 1-phosphate (dRib-1-P) and ribose 1-phosphate (Rib-1-P) to deoxy-ribose 5-phosphate (dRib-5-P) and ribose 5-phosphate (Rib-5-P), respectively. This chain is Phosphopentomutase, found in Clostridium perfringens (strain 13 / Type A).